The following is a 368-amino-acid chain: UDP-N-acetylglucosamine--N-acetylmuramyl-(pentapeptide) pyrophosphoryl-undecaprenol N-acetylglucosamine transferase (368 aa).

UDP-N-acetyl-alpha-D-glucosamine is bound by residues 13-15, Asn124, Arg167, Ser195, and Gln296; that span reads TGG.

The protein belongs to the glycosyltransferase 28 family. MurG subfamily.

The protein resides in the cell inner membrane. The enzyme catalyses di-trans,octa-cis-undecaprenyl diphospho-N-acetyl-alpha-D-muramoyl-L-alanyl-D-glutamyl-meso-2,6-diaminopimeloyl-D-alanyl-D-alanine + UDP-N-acetyl-alpha-D-glucosamine = di-trans,octa-cis-undecaprenyl diphospho-[N-acetyl-alpha-D-glucosaminyl-(1-&gt;4)]-N-acetyl-alpha-D-muramoyl-L-alanyl-D-glutamyl-meso-2,6-diaminopimeloyl-D-alanyl-D-alanine + UDP + H(+). It participates in cell wall biogenesis; peptidoglycan biosynthesis. Functionally, cell wall formation. Catalyzes the transfer of a GlcNAc subunit on undecaprenyl-pyrophosphoryl-MurNAc-pentapeptide (lipid intermediate I) to form undecaprenyl-pyrophosphoryl-MurNAc-(pentapeptide)GlcNAc (lipid intermediate II). The sequence is that of UDP-N-acetylglucosamine--N-acetylmuramyl-(pentapeptide) pyrophosphoryl-undecaprenol N-acetylglucosamine transferase from Maricaulis maris (strain MCS10) (Caulobacter maris).